We begin with the raw amino-acid sequence, 296 residues long: MSQKELWYETLHANFGQYFSVENVLYREKTEHQDLVIFENPELGRVMALDGVVQTTERDEFIYHEMMTHVPLLAHGQAKKVLIIGGGDGAMLREVSRHKNIEQITMVEIDAGVVEFCRQYLPNHSAGAYDDPRFKLVIDDGVNFVNQTTEKFDVIISDCTDPIGPGESLFTSVFYEGCARSLNEGGIFVAQNGVCFLQQDEAVNSHNKLSHYFSDVSFYQAAIPTYYGGIMTFAWATQNPALRQLDLATLQNRFAQAGLACRYYNPAIHVGSFALPQYLLDALTTIPKVIGLDSSE.

One can recognise a PABS domain in the interval 5-238; it reads ELWYETLHAN…GIMTFAWATQ (234 aa). Gln33 lines the S-methyl-5'-thioadenosine pocket. The spermidine site is built by His64 and Asp88. Residues Glu108 and 140-141 each bind S-methyl-5'-thioadenosine; that span reads DG. Catalysis depends on Asp158, which acts as the Proton acceptor. 158–161 provides a ligand contact to spermidine; it reads DCTD. Residue Pro165 coordinates S-methyl-5'-thioadenosine.

The protein belongs to the spermidine/spermine synthase family. Homodimer or homotetramer.

The protein localises to the cytoplasm. It carries out the reaction S-adenosyl 3-(methylsulfanyl)propylamine + putrescine = S-methyl-5'-thioadenosine + spermidine + H(+). It participates in amine and polyamine biosynthesis; spermidine biosynthesis; spermidine from putrescine: step 1/1. In terms of biological role, catalyzes the irreversible transfer of a propylamine group from the amino donor S-adenosylmethioninamine (decarboxy-AdoMet) to putrescine (1,4-diaminobutane) to yield spermidine. The sequence is that of Polyamine aminopropyltransferase from Yersinia pseudotuberculosis serotype O:3 (strain YPIII).